Reading from the N-terminus, the 385-residue chain is Linearmycin resistance permease protein LnrN (385 aa).

Helical transmembrane passes span 22–42, 198–218, 239–259, 274–294, 305–325, and 360–380; these read YLIM…MLSG, AAGF…GTIL, IGAG…GILL, AAVI…GLMI, LAFG…YWPI, and DILG…AAGL. The ABC transmembrane type-2 domain occupies 163-382; that stretch reads KTVFAKKHED…AITFAAGLKA (220 aa).

It belongs to the ABC-2 integral membrane protein family. As to quaternary structure, the complex is composed of two ATP-binding proteins (LnrL) and two transmembrane proteins (LnrM and LnrN).

The protein localises to the cell membrane. In terms of biological role, required for resistance to linearmycins, a family of antibiotic-specialized metabolites produced by some streptomycetes. Part of the ABC transporter complex LnrLMN that probably facilitates linearmycin removal from the membrane. Responsible for the translocation of the substrate across the membrane. Also mediates KinC-dependent biofilm morphology. This is Linearmycin resistance permease protein LnrN from Bacillus subtilis (strain 168).